We begin with the raw amino-acid sequence, 37 residues long: uncharacterized protein (37 aa).

Residues 1-21 (MQDLEIFLSIFAFIFVFYFGA) traverse the membrane as a helical segment.

The protein resides in the endoplasmic reticulum membrane. This is an uncharacterized protein from Saccharomyces cerevisiae (strain ATCC 204508 / S288c) (Baker's yeast).